The chain runs to 414 residues: BICD family-like cargo adapter 2 (414 aa).

Positions 34 to 341 form a coiled coil; it reads GQALLEKNEE…DALNQQLLNT (308 aa). The segment covering 372-384 has biased composition (basic and acidic residues); sequence QEKEKENNKERTG. Residues 372 to 399 are disordered; that stretch reads QEKEKENNKERTGFQRGTRTTKSLRLRG.

In Danio rerio (Zebrafish), this protein is BICD family-like cargo adapter 2 (bicdl2).